Here is a 125-residue protein sequence, read N- to C-terminus: Protein JAZ13 (125 aa).

Residues 6–10 (LDLHL) carry the EAR motif. A disordered region spans residues 99-125 (KKRSKSFTLTPNYTSSTSSSSSSLHNF). Over residues 112–125 (TSSTSSSSSSLHNF) the composition is skewed to low complexity.

As to quaternary structure, monomer. Lack of homodimerization, and very weak or no interaction with AFPH2/NINJA and other JAZ proteins. Interacts (via EAR motif) with TPL. Interacts (via jas motif) with MYC2. In terms of processing, phosphorylated at multiple serine residues.

In terms of biological role, non-TIFY functional repressor of jasmonate (JA)-mediated growth and defense responses. Intrinsically resistant to JA-induced turnover, probably due to the absence of the canonical degron that strongly interacts with COI1 in the presence of JA-Ile in the TIFY/JAZ proteins. This Arabidopsis thaliana (Mouse-ear cress) protein is Protein JAZ13.